A 99-amino-acid chain; its full sequence is Nucleoid-associated protein SUB1611 (99 aa).

It belongs to the YbaB/EbfC family. In terms of assembly, homodimer.

It is found in the cytoplasm. Its subcellular location is the nucleoid. In terms of biological role, binds to DNA and alters its conformation. May be involved in regulation of gene expression, nucleoid organization and DNA protection. This chain is Nucleoid-associated protein SUB1611, found in Streptococcus uberis (strain ATCC BAA-854 / 0140J).